The following is a 189-amino-acid chain: Large ribosomal subunit protein bL9 (189 aa).

It belongs to the bacterial ribosomal protein bL9 family.

Functionally, binds to the 23S rRNA. This chain is Large ribosomal subunit protein bL9, found in Cereibacter sphaeroides (strain KD131 / KCTC 12085) (Rhodobacter sphaeroides).